A 202-amino-acid chain; its full sequence is Recombination protein RecR (202 aa).

A C4-type zinc finger spans residues 59–74 (CSVCFHLSAEPVCEIC). Residues 82–176 (HTICVVADSR…KVTRIAFGLP (95 aa)) enclose the Toprim domain.

It belongs to the RecR family.

In terms of biological role, may play a role in DNA repair. It seems to be involved in an RecBC-independent recombinational process of DNA repair. It may act with RecF and RecO. This Thermosynechococcus vestitus (strain NIES-2133 / IAM M-273 / BP-1) protein is Recombination protein RecR.